A 215-amino-acid polypeptide reads, in one-letter code: Adenylate kinase (215 aa).

10-15 is an ATP binding site; the sequence is GAGKGT. The tract at residues 30–59 is NMP; that stretch reads STGDMLRAAIKAGTPLGLEAKKIIDEGGLV. AMP is bound by residues Thr31, Arg36, 57–59, 85–88, and Gln92; these read GLV and GFPR. The LID stretch occupies residues 122–159; that stretch reads GRRVHLASGRTYHVTYNPPKVEGKDDVTGEDLIQRDDD. ATP-binding positions include Arg123 and 132 to 133; that span reads TY. AMP contacts are provided by Arg156 and Arg167. Residue Gln200 participates in ATP binding.

The protein belongs to the adenylate kinase family. In terms of assembly, monomer.

The protein resides in the cytoplasm. The enzyme catalyses AMP + ATP = 2 ADP. It participates in purine metabolism; AMP biosynthesis via salvage pathway; AMP from ADP: step 1/1. Catalyzes the reversible transfer of the terminal phosphate group between ATP and AMP. Plays an important role in cellular energy homeostasis and in adenine nucleotide metabolism. This chain is Adenylate kinase, found in Neisseria meningitidis serogroup B (strain ATCC BAA-335 / MC58).